We begin with the raw amino-acid sequence, 146 residues long: MLAAALRRCTAAAAARGLLHPVSAPSPAAAVCSIRCYSHGSHETDEEFDARWVTYFNKPDIDAWELRKGMNTLVGYDLVPEPKIIDAALRACRRLNDFASAVRILEVVKDKAGPHKEIYPYVIQELRPTLNELGISTPEELGLDKV.

Residues 1-37 constitute a mitochondrion transit peptide; that stretch reads MLAAALRRCTAAAAARGLLHPVSAPSPAAAVCSIRCY. Positions 2-16 match the SIFI-degron motif; sequence LAAALRRCTAAAAAR. 2 positions are modified to N6-acetyllysine: lysine 83 and lysine 109. A Phosphothreonine modification is found at threonine 137.

In terms of assembly, component of the cytochrome c oxidase (complex IV, CIV), a multisubunit enzyme composed of 14 subunits. The complex is composed of a catalytic core of 3 subunits MT-CO1, MT-CO2 and MT-CO3, encoded in the mitochondrial DNA, and 11 supernumerary subunits COX4I, COX5A, COX5B, COX6A, COX6B, COX6C, COX7A, COX7B, COX7C, COX8 and NDUFA4, which are encoded in the nuclear genome. The complex exists as a monomer or a dimer and forms supercomplexes (SCs) in the inner mitochondrial membrane with NADH-ubiquinone oxidoreductase (complex I, CI) and ubiquinol-cytochrome c oxidoreductase (cytochrome b-c1 complex, complex III, CIII), resulting in different assemblies (supercomplex SCI(1)III(2)IV(1) and megacomplex MCI(2)III(2)IV(2)). Interacts with AFG1L. Interacts with RAB5IF. In response to mitochondrial stress, the precursor protein is ubiquitinated by the SIFI complex in the cytoplasm before mitochondrial import, leading to its degradation. Within the SIFI complex, UBR4 initiates ubiquitin chain that are further elongated or branched by KCMF1. Expressed in the head of epididymal sperm but not in testicular sperm (at protein level).

Its subcellular location is the mitochondrion inner membrane. Its pathway is energy metabolism; oxidative phosphorylation. In terms of biological role, component of the cytochrome c oxidase, the last enzyme in the mitochondrial electron transport chain which drives oxidative phosphorylation. The respiratory chain contains 3 multisubunit complexes succinate dehydrogenase (complex II, CII), ubiquinol-cytochrome c oxidoreductase (cytochrome b-c1 complex, complex III, CIII) and cytochrome c oxidase (complex IV, CIV), that cooperate to transfer electrons derived from NADH and succinate to molecular oxygen, creating an electrochemical gradient over the inner membrane that drives transmembrane transport and the ATP synthase. Cytochrome c oxidase is the component of the respiratory chain that catalyzes the reduction of oxygen to water. Electrons originating from reduced cytochrome c in the intermembrane space (IMS) are transferred via the dinuclear copper A center (CU(A)) of subunit 2 and heme A of subunit 1 to the active site in subunit 1, a binuclear center (BNC) formed by heme A3 and copper B (CU(B)). The BNC reduces molecular oxygen to 2 water molecules using 4 electrons from cytochrome c in the IMS and 4 protons from the mitochondrial matrix. This Rattus norvegicus (Rat) protein is Cytochrome c oxidase subunit 5A, mitochondrial (Cox5a).